A 476-amino-acid chain; its full sequence is Protein DETOXIFICATION 3 (476 aa).

12 helical membrane-spanning segments follow: residues 35–55 (AAPM…SVMV), 66–86 (GVAL…FGLA), 117–137 (IPIC…LISL), 146–166 (VAGS…FFIP), 185–205 (LTTL…FGLG), 208–228 (GAAM…SCYV), 260–280 (AAMV…SGLL), 289–309 (VLSI…GVAA), 331–351 (VLAG…LLFT), 370–390 (VANL…TAVL), 402–422 (IGAL…GVYL), and 433–453 (LWCG…FVTA).

The protein belongs to the multi antimicrobial extrusion (MATE) (TC 2.A.66.1) family.

The protein localises to the membrane. In Arabidopsis thaliana (Mouse-ear cress), this protein is Protein DETOXIFICATION 3.